The primary structure comprises 93 residues: Small ribosomal subunit protein uS19 (93 aa).

It belongs to the universal ribosomal protein uS19 family.

Protein S19 forms a complex with S13 that binds strongly to the 16S ribosomal RNA. The protein is Small ribosomal subunit protein uS19 of Thermoanaerobacter pseudethanolicus (strain ATCC 33223 / 39E) (Clostridium thermohydrosulfuricum).